The primary structure comprises 272 residues: METHILFFILAGLLIAVLIGYSIWSARREKSRIFSNTFSTRPPSSPISNEITADIPTTLNPQGVVAQQPFNTETPADFIQSQQEVENSVKNIRISLQTQEISQPLYQETMPESPSEAYQQNQIQEQTVQVEQVETIEQTTEHNIITLYVVAPEGVQFQGNAIVQNLEMLGFHFGEYQIFHRHLDNPASPVLFSVANMMQPGVFDLARMEQFSTVGLVFFMHLPSVGNDLANLKLMIRTVESFAQSVGGFVLDEQHQIFNDESRQNYLLRVAN.

Over 1–4 (METH) the chain is Periplasmic. A helical transmembrane segment spans residues 5 to 25 (ILFFILAGLLIAVLIGYSIWS). Residues 26–272 (ARREKSRIFS…RQNYLLRVAN (247 aa)) are Cytoplasmic-facing.

The protein belongs to the ZipA family. In terms of assembly, interacts with FtsZ via their C-terminal domains.

Its subcellular location is the cell inner membrane. Functionally, essential cell division protein that stabilizes the FtsZ protofilaments by cross-linking them and that serves as a cytoplasmic membrane anchor for the Z ring. Also required for the recruitment to the septal ring of downstream cell division proteins. This is Cell division protein ZipA from Glaesserella parasuis serovar 5 (strain SH0165) (Haemophilus parasuis).